The chain runs to 310 residues: Protein DOS2 (310 aa).

Basic and acidic residues-rich tracts occupy residues 15 to 26 and 135 to 146; these read DKISNSHTKETG and SNDKDENSKENE. Disordered stretches follow at residues 15–45 and 131–151; these read DKISNSHTKETGSTENTENNELQSRDDKTNE and AENDSNDKDENSKENEIAVGG. Residues 176 to 228 enclose the BSD domain; the sequence is QLDPFDVDEKTEEICSILQGDKDISKLMNDIVPHKISYKDFWHIYFLQRNKIL. Positions 240-310 are disordered; it reads KKEKETEEKE…KDDDDDDDWE (71 aa). The span at 247-263 shows a compositional bias: acidic residues; the sequence is EKEVEWDDEEEEEDDDK. Composition is skewed to basic and acidic residues over residues 264-276 and 284-300; these read VEAVADNKSKGET and GLKDVSDHVGLANKDES. Residues 301–310 show a composition bias toward acidic residues; it reads KDDDDDDDWE.

Acts in ubiquitin metabolism and is necessary for the control of single-copy DNA replication. The polypeptide is Protein DOS2 (DOS2) (Saccharomyces cerevisiae (strain ATCC 204508 / S288c) (Baker's yeast)).